Reading from the N-terminus, the 344-residue chain is Centromere protein L (344 aa).

Phosphoserine is present on Ser39. Phosphothreonine is present on Thr43. Ser53 carries the post-translational modification Phosphoserine.

It belongs to the CENP-L/IML3 family. In terms of assembly, component of the CENPA-CAD complex, composed of CENPI, CENPK, CENPL, CENPO, CENPP, CENPQ, CENPR and CENPS. The CENPA-CAD complex interacts with the CENPA-NAC complex, at least composed of CENPA, CENPC, CENPH, CENPM, CENPN, CENPT and CENPU.

The protein localises to the nucleus. It localises to the chromosome. Its subcellular location is the centromere. Functionally, component of the CENPA-CAD (nucleosome distal) complex, a complex recruited to centromeres which is involved in assembly of kinetochore proteins, mitotic progression and chromosome segregation. May be involved in incorporation of newly synthesized CENPA into centromeres via its interaction with the CENPA-NAC complex. In Homo sapiens (Human), this protein is Centromere protein L (CENPL).